An 804-amino-acid polypeptide reads, in one-letter code: Phenylalanine--tRNA ligase beta subunit (804 aa).

A tRNA-binding domain is found at 40–153; that stretch reads PLPDLRVVVG…SSYAVGEPFA (114 aa). The region spanning 400–476 is the B5 domain; the sequence is PALLVLPFRP…RLHGYDNIEA (77 aa). The Mg(2+) site is built by D454, D460, E463, and E464. The FDX-ACB domain maps to 710-802; sequence SKFPAVQRDL…AESKLGAVIR (93 aa).

Belongs to the phenylalanyl-tRNA synthetase beta subunit family. Type 1 subfamily. As to quaternary structure, tetramer of two alpha and two beta subunits. Mg(2+) is required as a cofactor.

Its subcellular location is the cytoplasm. The catalysed reaction is tRNA(Phe) + L-phenylalanine + ATP = L-phenylalanyl-tRNA(Phe) + AMP + diphosphate + H(+). In Chlorobium luteolum (strain DSM 273 / BCRC 81028 / 2530) (Pelodictyon luteolum), this protein is Phenylalanine--tRNA ligase beta subunit.